The chain runs to 338 residues: Nuclear hormone receptor family member nhr-52 (338 aa).

Residues 1 to 75 constitute a DNA-binding region (nuclear receptor); sequence MKCLVCCSYA…IGMRFSEPKQ (75 aa). 2 NR C4-type zinc fingers span residues 3 to 23 and 39 to 63; these read CLVC…CSAC and CKYD…FKKC. Residues 98 to 337 enclose the NR LBD domain; that stretch reads KDGVHYSNFL…KKLVNDIIIR (240 aa).

The protein belongs to the nuclear hormone receptor family.

It localises to the nucleus. Its function is as follows. Orphan nuclear receptor. The protein is Nuclear hormone receptor family member nhr-52 (nhr-52) of Caenorhabditis elegans.